Consider the following 374-residue polypeptide: Eukaryotic translation initiation factor 3 subunit M (374 aa).

Position 2 is an N-acetylserine (serine 2). Residues serine 2 and serine 152 each carry the phosphoserine modification. Residues 180–339 (AASKVMVELL…RKVVVSHSTH (160 aa)) form the PCI domain. Lysine 254 carries the N6-acetyllysine modification. The segment at 344–374 (KQQWQQLYDTLNAWKQNLNKVKNSLLSLSDT) is interaction with HSV-1 and HSV-2. Serine 367 is modified (phosphoserine).

In terms of assembly, component of the eukaryotic translation initiation factor 3 (eIF-3) complex, which is composed of 13 subunits: EIF3A, EIF3B, EIF3C, EIF3D, EIF3E, EIF3F, EIF3G, EIF3H, EIF3I, EIF3J, EIF3K, EIF3L and EIF3M. The eIF-3 complex appears to include 3 stable modules: module A is composed of EIF3A, EIF3B, EIF3G and EIF3I; module B is composed of EIF3F, EIF3H, and EIF3M; and module C is composed of EIF3C, EIF3D, EIF3E, EIF3K and EIF3L. EIF3C of module C binds EIF3B of module A and EIF3H of module B, thereby linking the three modules. EIF3J is a labile subunit that binds to the eIF-3 complex via EIF3B. The eIF-3 complex interacts with RPS6KB1 under conditions of nutrient depletion. Mitogenic stimulation leads to binding and activation of a complex composed of MTOR and RPTOR, leading to phosphorylation and release of RPS6KB1 and binding of EIF4B to eIF-3. As to expression, broadly expressed.

It localises to the cytoplasm. Functionally, component of the eukaryotic translation initiation factor 3 (eIF-3) complex, which is required for several steps in the initiation of protein synthesis. The eIF-3 complex associates with the 40S ribosome and facilitates the recruitment of eIF-1, eIF-1A, eIF-2:GTP:methionyl-tRNAi and eIF-5 to form the 43S pre-initiation complex (43S PIC). The eIF-3 complex stimulates mRNA recruitment to the 43S PIC and scanning of the mRNA for AUG recognition. The eIF-3 complex is also required for disassembly and recycling of post-termination ribosomal complexes and subsequently prevents premature joining of the 40S and 60S ribosomal subunits prior to initiation. The eIF-3 complex specifically targets and initiates translation of a subset of mRNAs involved in cell proliferation, including cell cycling, differentiation and apoptosis, and uses different modes of RNA stem-loop binding to exert either translational activation or repression. Its function is as follows. (Microbial infection) May favor virus entry in case of infection with herpes simplex virus 1 (HSV1) or herpes simplex virus 2 (HSV2). The protein is Eukaryotic translation initiation factor 3 subunit M of Homo sapiens (Human).